Consider the following 360-residue polypeptide: Phosphate acyltransferase (360 aa).

It belongs to the PlsX family. As to quaternary structure, homodimer. Probably interacts with PlsY.

The protein localises to the cytoplasm. It catalyses the reaction a fatty acyl-[ACP] + phosphate = an acyl phosphate + holo-[ACP]. It participates in lipid metabolism; phospholipid metabolism. Functionally, catalyzes the reversible formation of acyl-phosphate (acyl-PO(4)) from acyl-[acyl-carrier-protein] (acyl-ACP). This enzyme utilizes acyl-ACP as fatty acyl donor, but not acyl-CoA. The protein is Phosphate acyltransferase of Caulobacter vibrioides (strain ATCC 19089 / CIP 103742 / CB 15) (Caulobacter crescentus).